A 436-amino-acid polypeptide reads, in one-letter code: Adenosylhomocysteinase (436 aa).

3 residues coordinate substrate: T62, D136, and E161. 162–164 (TTT) provides a ligand contact to NAD(+). Residues K191 and D195 each coordinate substrate. NAD(+) is bound by residues N196, 225 to 230 (GFGDVG), E248, N283, 304 to 306 (IGH), and N352.

The protein belongs to the adenosylhomocysteinase family. NAD(+) serves as cofactor.

The protein localises to the cytoplasm. It catalyses the reaction S-adenosyl-L-homocysteine + H2O = L-homocysteine + adenosine. It functions in the pathway amino-acid biosynthesis; L-homocysteine biosynthesis; L-homocysteine from S-adenosyl-L-homocysteine: step 1/1. Functionally, may play a key role in the regulation of the intracellular concentration of adenosylhomocysteine. The protein is Adenosylhomocysteinase of Leptospira interrogans serogroup Icterohaemorrhagiae serovar copenhageni (strain Fiocruz L1-130).